Reading from the N-terminus, the 274-residue chain is Probable S-adenosylmethionine-dependent methyltransferase MT3114 (274 aa).

The segment at 1–24 (MCAFVPHVPRHSRGDNPPSASTAS) is disordered.

The protein belongs to the methyltransferase superfamily.

Functionally, probable S-adenosylmethionine-dependent methyltransferase required for the 6-O-methylation of the polysaccharide backbone of 6-O-methylglucosyl lipopolysaccharides (MGLP). In Mycobacterium tuberculosis (strain CDC 1551 / Oshkosh), this protein is Probable S-adenosylmethionine-dependent methyltransferase MT3114.